A 107-amino-acid polypeptide reads, in one-letter code: DNA polymerase delta subunit 4 (107 aa).

Residues 1–16 carry the PCNA-interaction protein motif (PIP box) motif; the sequence is MGRKRFITDSYPVVKK. The tract at residues 1-40 is disordered; the sequence is MGRKRFITDSYPVVKKREGPPGHSKGELAPELGEDTQSLS. The span at 15–28 shows a compositional bias: basic and acidic residues; sequence KKREGPPGHSKGEL.

Belongs to the DNA polymerase delta subunit 4 family. As to quaternary structure, component of the tetrameric DNA polymerase delta complex (Pol-delta4), which consists of POLD1/p125, POLD2/p50, POLD3/p66/p68 and POLD4/p12, with POLD1 bearing DNA polymerase and 3' to 5' proofreading exonuclease activities. Within this complex, directly interacts with POLD1 and POLD2. Directly interacts with PCNA, as do POLD1 and POLD3; this interaction stimulates Pol-delta4 polymerase activity. As POLD1 and POLD2, directly interacts with WRNIP1; this interaction stimulates DNA polymerase delta-mediated DNA synthesis, independently of the presence of PCNA, possibly by increasing initiation frequency. Upon genotoxic stress induced by DNA damaging agents or by replication stress, POLD4 is proteolytically degraded and Pol-delta4 is converted into a trimeric form of the complex (Pol-delta3) that has an increased proofreading activity. The DNA polymerase delta complex interacts with POLDIP2; this interaction is probably mediated through direct binding to POLD2. Post-translationally, ubiquitinated; undergoes 'Lys-48'-linked polyubiquitination in response to UV irradiation or treatment with an alkylating agent, leading to proteasomal degradation. This modification is mediated, at least in part, by RNF8. Ubiquitinated; undergoes 'Lys-48'-linked ubiquitination in response to UV irradiation, leading to proteasomal degradation. This modification is partly mediated by RNF8 and by the DCX(DTL) E3 ubiquitin ligase complex (also called CRL4(CDT2)). Efficient degradation requires the presence of PCNA and is required for the inhibition of fork progression after DNA damage.

Its subcellular location is the nucleus. As a component of the tetrameric DNA polymerase delta complex (Pol-delta4), plays a role in high fidelity genome replication and repair. Within this complex, increases the rate of DNA synthesis and decreases fidelity by regulating POLD1 polymerase and proofreading 3' to 5' exonuclease activity. Pol-delta4 participates in Okazaki fragment processing, through both the short flap pathway, as well as a nick translation system. Under conditions of DNA replication stress, required for the repair of broken replication forks through break-induced replication (BIR), a mechanism that may induce segmental genomic duplications of up to 200 kb. Involved in Pol-delta4 translesion synthesis (TLS) of templates carrying O6-methylguanine or abasic sites. Its degradation in response to DNA damage is required for the inhibition of fork progression and cell survival. This Mus musculus (Mouse) protein is DNA polymerase delta subunit 4 (Pold4).